Consider the following 293-residue polypeptide: MTLTERLSLYEKLARLDKPIGILLLLWPTLWAQWLASNGDPDWLILWIFVMGVVLMRSAGCVVNDYADRDFDPHVARTRDRPIAAGKVSPKEALLLAAGLSLLAFLLILPLNALVLKLSLIALFLAGSYPFTKRFFAIPQAYLGVAFGFGIPMSYAALWGEVPAEAWLLLAANVFWAIAYDTEYAMVDRADDLKIGIKTSAITFGRFDLTAIAFCYAATLALLAWVGALRDFSGWYYAGLAAAGAIAVYHLRLIRERDPRQCFRAFLHNTWFGAAVFGGIVLHFLLRSGSLFP.

A run of 8 helical transmembrane segments spans residues 19 to 39 (PIGILLLLWPTLWAQWLASNG), 43 to 63 (WLILWIFVMGVVLMRSAGCVV), 95 to 115 (LLAAGLSLLAFLLILPLNALV), 135 to 155 (FFAIPQAYLGVAFGFGIPMSY), 158 to 178 (LWGEVPAEAWLLLAANVFWAI), 209 to 229 (LTAIAFCYAATLALLAWVGAL), 231 to 251 (DFSGWYYAGLAAAGAIAVYHL), and 266 to 286 (FLHNTWFGAAVFGGIVLHFLL).

It belongs to the UbiA prenyltransferase family. It depends on Mg(2+) as a cofactor.

It is found in the cell inner membrane. It carries out the reaction all-trans-octaprenyl diphosphate + 4-hydroxybenzoate = 4-hydroxy-3-(all-trans-octaprenyl)benzoate + diphosphate. Its pathway is cofactor biosynthesis; ubiquinone biosynthesis. Functionally, catalyzes the prenylation of para-hydroxybenzoate (PHB) with an all-trans polyprenyl group. Mediates the second step in the final reaction sequence of ubiquinone-8 (UQ-8) biosynthesis, which is the condensation of the polyisoprenoid side chain with PHB, generating the first membrane-bound Q intermediate 3-octaprenyl-4-hydroxybenzoate. This is 4-hydroxybenzoate octaprenyltransferase from Thiobacillus denitrificans (strain ATCC 25259 / T1).